The following is a 949-amino-acid chain: Piwi-like protein 2 (949 aa).

The interval 1-125 is disordered; it reads MDPTRPPFRG…SLSTRVQQAS (125 aa). Residues 115-125 are compositionally biased toward polar residues; sequence PSLSTRVQQAS. In terms of domain architecture, PAZ spans 366 to 478; the sequence is SVLDIMNILY…LLPELAFMTG (113 aa). Positions 644 to 935 constitute a Piwi domain; sequence LLVCLISGTR…LAFLSGQFLH (292 aa). Active-site residues include D721, E759, D791, and H924.

It belongs to the argonaute family. Piwi subfamily. Component of the PET complex. It depends on Mg(2+) as a cofactor. Post-translationally, methylated on arginine residues; required for the interaction with Tudor domain-containing protein and subsequent localization to the meiotic nuage, also named P granule. As to expression, expressed in oocytes, testis and liver (at protein level).

The protein localises to the cytoplasm. The protein resides in the nucleus. Functionally, endoribonuclease that plays a central role during spermatogenesis by repressing transposable elements and preventing their mobilization, which is essential for the germline integrity. Plays an essential role in meiotic differentiation of spermatocytes, germ cell differentiation and in self-renewal of spermatogonial stem cells. Acts via the piRNA metabolic process, which mediates the repression of transposable elements during meiosis by forming complexes composed of piRNAs and Piwi proteins and govern the methylation and subsequent repression of transposons. During piRNA biosynthesis, plays a key role in the piRNA amplification loop, also named ping-pong amplification cycle, by acting as a 'slicer-competent' piRNA endoribonuclease that cleaves primary piRNAs, which are then loaded onto 'slicer-incompetent' piwil4. Piwil2 slicing produces a pre-miRNA intermediate, which is then processed in mature piRNAs, and as well as a 16 nucleotide by-product that is degraded. Required for piwil4/miwi2 nuclear localization and association with secondary piRNAs antisense. Represses circadian rhythms by promoting the stability and activity of core clock components BMAL1 and CLOCK. This Xenopus tropicalis (Western clawed frog) protein is Piwi-like protein 2 (piwil2).